Consider the following 97-residue polypeptide: Large ribosomal subunit protein uL23 (97 aa).

It belongs to the universal ribosomal protein uL23 family. In terms of assembly, part of the 50S ribosomal subunit. Contacts protein L29, and trigger factor when it is bound to the ribosome.

One of the early assembly proteins it binds 23S rRNA. One of the proteins that surrounds the polypeptide exit tunnel on the outside of the ribosome. Forms the main docking site for trigger factor binding to the ribosome. The sequence is that of Large ribosomal subunit protein uL23 from Acidithiobacillus ferrooxidans (strain ATCC 23270 / DSM 14882 / CIP 104768 / NCIMB 8455) (Ferrobacillus ferrooxidans (strain ATCC 23270)).